The chain runs to 354 residues: 3-dehydroquinate synthase (354 aa).

Residues 100 to 104, 124 to 125, Lys136, Lys145, and 163 to 166 contribute to the NAD(+) site; these read GATGD, TT, and FLKT. 3 residues coordinate Zn(2+): Glu178, His242, and His256.

Belongs to the sugar phosphate cyclases superfamily. Dehydroquinate synthase family. It depends on NAD(+) as a cofactor. Co(2+) is required as a cofactor. Zn(2+) serves as cofactor.

It localises to the cytoplasm. The catalysed reaction is 7-phospho-2-dehydro-3-deoxy-D-arabino-heptonate = 3-dehydroquinate + phosphate. Its pathway is metabolic intermediate biosynthesis; chorismate biosynthesis; chorismate from D-erythrose 4-phosphate and phosphoenolpyruvate: step 2/7. Functionally, catalyzes the conversion of 3-deoxy-D-arabino-heptulosonate 7-phosphate (DAHP) to dehydroquinate (DHQ). In Staphylococcus aureus (strain MSSA476), this protein is 3-dehydroquinate synthase.